Here is a 98-residue protein sequence, read N- to C-terminus: Ribonuclease kappa (98 aa).

The next 2 membrane-spanning stretches (helical) occupy residues 13–33 (ACGIVLSAWGVIMLIMLGIFF) and 65–85 (VSYNCFIAASLYLLLGGFSFC).

Belongs to the RNase K family. As to quaternary structure, interacts with the proton translocation complex V0 of the V-ATPase. Interacts with ATP6AP1. In terms of tissue distribution, expressed in brain (at protein level).

The protein resides in the endomembrane system. The protein localises to the cytoplasmic vesicle. It localises to the clathrin-coated vesicle membrane. Its function is as follows. Endoribonuclease which preferentially cleaves ApU and ApG phosphodiester bonds. Hydrolyzes UpU bonds at a lower rate. Regulates the activity of vacuolar (H+)-ATPase (V-ATPase) which is responsible for acidifying and maintaining the pH of intracellular compartments. Required at an early stage of receptor-mediated endocytosis. This chain is Ribonuclease kappa (RNASEK), found in Bos taurus (Bovine).